The sequence spans 324 residues: MSTIQPSAAFLYDRVQRLIPPIEWPAFAGDIDAILDLKRQRNAVILAHNYQTPEIFHCVADIVGDSLALARKAMSTEADVIVLAGVHFMAETAKLLNPQKTVLIPDLRAGCSLADSITAEDIRLLRQRYPGVPVVTYVNTSAEVKAESDICCTSGNAKAIVESLGVPRVIMLPDEYLAENIAAQTDVEIIAWKGHCEVHERFTPADIRQLRENHPGVIVLAHPECPPDVVAEADFSGSTAAMSDYVERQKPPRVVLLTECSMSDNVALQHPELEFIRPCNLCPHMKRITLANIRSALEQNRHVVTIEPGIAGRARLAVERMLAV.

Positions 48 and 66 each coordinate iminosuccinate. C111 contributes to the [4Fe-4S] cluster binding site. Iminosuccinate-binding positions include 137–139 (YVN) and S154. Residue C196 coordinates [4Fe-4S] cluster. Iminosuccinate contacts are provided by residues 222 to 224 (HPE) and T239. C282 serves as a coordination point for [4Fe-4S] cluster.

This sequence belongs to the quinolinate synthase family. Type 2 subfamily. Requires [4Fe-4S] cluster as cofactor.

It is found in the cytoplasm. It catalyses the reaction iminosuccinate + dihydroxyacetone phosphate = quinolinate + phosphate + 2 H2O + H(+). It functions in the pathway cofactor biosynthesis; NAD(+) biosynthesis; quinolinate from iminoaspartate: step 1/1. Its function is as follows. Catalyzes the condensation of iminoaspartate with dihydroxyacetone phosphate to form quinolinate. This Mesorhizobium japonicum (strain LMG 29417 / CECT 9101 / MAFF 303099) (Mesorhizobium loti (strain MAFF 303099)) protein is Quinolinate synthase 2.